The following is a 487-amino-acid chain: Malonate-semialdehyde dehydrogenase (487 aa).

Residues Ala150, Phe152, Lys176, Glu179, Arg180, Ser229, and Thr251 each contribute to the NAD(+) site. Catalysis depends on Cys284, which acts as the Nucleophile. Glu382 contacts NAD(+).

It belongs to the aldehyde dehydrogenase family. IolA subfamily. In terms of assembly, homotetramer.

It catalyses the reaction 3-oxopropanoate + NAD(+) + CoA + H2O = hydrogencarbonate + acetyl-CoA + NADH + H(+). The catalysed reaction is 2-methyl-3-oxopropanoate + NAD(+) + CoA + H2O = propanoyl-CoA + hydrogencarbonate + NADH + H(+). The protein operates within polyol metabolism; myo-inositol degradation into acetyl-CoA; acetyl-CoA from myo-inositol: step 7/7. Catalyzes the oxidation of malonate semialdehyde (MSA) and methylmalonate semialdehyde (MMSA) into acetyl-CoA and propanoyl-CoA, respectively. Is involved in a myo-inositol catabolic pathway. Bicarbonate, and not CO2, is the end-product of the enzymatic reaction. The sequence is that of Malonate-semialdehyde dehydrogenase from Bacillus velezensis (strain DSM 23117 / BGSC 10A6 / LMG 26770 / FZB42) (Bacillus amyloliquefaciens subsp. plantarum).